The following is a 307-amino-acid chain: MTTDRTPQTPTDIYERVTSQIIAAIEAGASDYRMPWHHDGSAITTPVNVASSKAYRGVNILSLWAAAHAEGYAAGIWGTYRQWQALDAQVRKGERGHLVVFWKTTDRDAADAQHGDEDRHEPARRLFARGYTVFNCAQVDGYTPPEMPVLPEAERIERAERFCASLGIDIRHGGSQAYYRPSTDHVQMPEFACFRDAVAYYAVLLHECGHASGAKHRLDRDLSGRFGSAAYAMEECTVELLSAMICADLNLSVEARPDHARYIASWLEALRSDQRAIFTAASKAQQIADWMHAQQSDAQRNEVRGAA.

This is an uncharacterized protein from Sinorhizobium fredii (strain NBRC 101917 / NGR234).